Consider the following 213-residue polypeptide: Cell division protein SepF (213 aa).

The disordered stretch occupies residues 27–103 (VDAPAPRRAP…GSLRGSAPTR (77 aa)). Basic and acidic residues-rich tracts occupy residues 35–51 (APVE…RFAD) and 72–90 (DEDR…DRPA).

The protein belongs to the SepF family. As to quaternary structure, homodimer. Interacts with FtsZ.

It is found in the cytoplasm. Its function is as follows. Cell division protein that is part of the divisome complex and is recruited early to the Z-ring. Probably stimulates Z-ring formation, perhaps through the cross-linking of FtsZ protofilaments. Its function overlaps with FtsA. This chain is Cell division protein SepF, found in Mycobacteroides abscessus (strain ATCC 19977 / DSM 44196 / CCUG 20993 / CIP 104536 / JCM 13569 / NCTC 13031 / TMC 1543 / L948) (Mycobacterium abscessus).